The following is a 382-amino-acid chain: ATP phosphoribosyltransferase regulatory subunit (382 aa).

It belongs to the class-II aminoacyl-tRNA synthetase family. HisZ subfamily. Heteromultimer composed of HisG and HisZ subunits.

Its subcellular location is the cytoplasm. It functions in the pathway amino-acid biosynthesis; L-histidine biosynthesis; L-histidine from 5-phospho-alpha-D-ribose 1-diphosphate: step 1/9. In terms of biological role, required for the first step of histidine biosynthesis. May allow the feedback regulation of ATP phosphoribosyltransferase activity by histidine. This is ATP phosphoribosyltransferase regulatory subunit from Burkholderia vietnamiensis (strain G4 / LMG 22486) (Burkholderia cepacia (strain R1808)).